Reading from the N-terminus, the 292-residue chain is 4-hydroxy-tetrahydrodipicolinate synthase (292 aa).

Threonine 45 is a binding site for pyruvate. The active-site Proton donor/acceptor is tyrosine 134. The active-site Schiff-base intermediate with substrate is the lysine 162. Valine 204 contributes to the pyruvate binding site.

Belongs to the DapA family. Homotetramer; dimer of dimers.

It is found in the cytoplasm. It carries out the reaction L-aspartate 4-semialdehyde + pyruvate = (2S,4S)-4-hydroxy-2,3,4,5-tetrahydrodipicolinate + H2O + H(+). Its pathway is amino-acid biosynthesis; L-lysine biosynthesis via DAP pathway; (S)-tetrahydrodipicolinate from L-aspartate: step 3/4. In terms of biological role, catalyzes the condensation of (S)-aspartate-beta-semialdehyde [(S)-ASA] and pyruvate to 4-hydroxy-tetrahydrodipicolinate (HTPA). The protein is 4-hydroxy-tetrahydrodipicolinate synthase of Marinobacter nauticus (strain ATCC 700491 / DSM 11845 / VT8) (Marinobacter aquaeolei).